Consider the following 230-residue polypeptide: Cytochrome c oxidase subunit 2 (230 aa).

Residues 1 to 14 (MAHPSQLGFQDAAS) are Mitochondrial intermembrane-facing. The chain crosses the membrane as a helical span at residues 15–45 (PVMEELLHFHDHALMIVLLISTLVLYIIVAM). Over 46-59 (VSTKLTNKYILDSQ) the chain is Mitochondrial matrix. Residues 60-87 (EIEIVWTVLPAVILILIALPSLRILYLM) form a helical membrane-spanning segment. Residues 88-230 (DEINDPHLTI…KWSTMMLEDA (143 aa)) are Mitochondrial intermembrane-facing. The Cu cation site is built by His-161, Cys-196, Glu-198, Cys-200, His-204, and Met-207. Glu-198 lines the Mg(2+) pocket.

It belongs to the cytochrome c oxidase subunit 2 family. Component of the cytochrome c oxidase (complex IV, CIV), a multisubunit enzyme composed of 14 subunits. The complex is composed of a catalytic core of 3 subunits MT-CO1, MT-CO2 and MT-CO3, encoded in the mitochondrial DNA, and 11 supernumerary subunits COX4I, COX5A, COX5B, COX6A, COX6B, COX6C, COX7A, COX7B, COX7C, COX8 and NDUFA4, which are encoded in the nuclear genome. The complex exists as a monomer or a dimer and forms supercomplexes (SCs) in the inner mitochondrial membrane with NADH-ubiquinone oxidoreductase (complex I, CI) and ubiquinol-cytochrome c oxidoreductase (cytochrome b-c1 complex, complex III, CIII), resulting in different assemblies (supercomplex SCI(1)III(2)IV(1) and megacomplex MCI(2)III(2)IV(2)). Found in a complex with TMEM177, COA6, COX18, COX20, SCO1 and SCO2. Interacts with TMEM177 in a COX20-dependent manner. Interacts with COX20. Interacts with COX16. Cu cation serves as cofactor.

It localises to the mitochondrion inner membrane. It carries out the reaction 4 Fe(II)-[cytochrome c] + O2 + 8 H(+)(in) = 4 Fe(III)-[cytochrome c] + 2 H2O + 4 H(+)(out). In terms of biological role, component of the cytochrome c oxidase, the last enzyme in the mitochondrial electron transport chain which drives oxidative phosphorylation. The respiratory chain contains 3 multisubunit complexes succinate dehydrogenase (complex II, CII), ubiquinol-cytochrome c oxidoreductase (cytochrome b-c1 complex, complex III, CIII) and cytochrome c oxidase (complex IV, CIV), that cooperate to transfer electrons derived from NADH and succinate to molecular oxygen, creating an electrochemical gradient over the inner membrane that drives transmembrane transport and the ATP synthase. Cytochrome c oxidase is the component of the respiratory chain that catalyzes the reduction of oxygen to water. Electrons originating from reduced cytochrome c in the intermembrane space (IMS) are transferred via the dinuclear copper A center (CU(A)) of subunit 2 and heme A of subunit 1 to the active site in subunit 1, a binuclear center (BNC) formed by heme A3 and copper B (CU(B)). The BNC reduces molecular oxygen to 2 water molecules using 4 electrons from cytochrome c in the IMS and 4 protons from the mitochondrial matrix. The sequence is that of Cytochrome c oxidase subunit 2 (mt-co2) from Salmo salar (Atlantic salmon).